The following is a 446-amino-acid chain: Tubulin alpha chain-like 3 (446 aa).

The MREC motif signature appears at 1–4 (MREC). The GTP site is built by Gln11, Glu78, Ser147, Gly151, Thr152, Thr186, Asn213, and Asn235. Glu78 serves as a coordination point for Mg(2+). The active site involves Glu261.

Belongs to the tubulin family. In terms of assembly, dimer of alpha and beta chains. A typical microtubule is a hollow water-filled tube with an outer diameter of 25 nm and an inner diameter of 15 nM. Alpha-beta heterodimers associate head-to-tail to form protofilaments running lengthwise along the microtubule wall with the beta-tubulin subunit facing the microtubule plus end conferring a structural polarity. Microtubules usually have 13 protofilaments but different protofilament numbers can be found in some organisms and specialized cells. Requires Mg(2+) as cofactor. Some glutamate residues at the C-terminus are polyglycylated, resulting in polyglycine chains on the gamma-carboxyl group. Glycylation is mainly limited to tubulin incorporated into axonemes (cilia and flagella) whereas glutamylation is prevalent in neuronal cells, centrioles, axonemes, and the mitotic spindle. Both modifications can coexist on the same protein on adjacent residues, and lowering polyglycylation levels increases polyglutamylation, and reciprocally. Cilia and flagella glycylation is required for their stability and maintenance. Flagella glycylation controls sperm motility. In terms of processing, some glutamate residues at the C-terminus are polyglutamylated, resulting in polyglutamate chains on the gamma-carboxyl group. Polyglutamylation plays a key role in microtubule severing by spastin (SPAST). SPAST preferentially recognizes and acts on microtubules decorated with short polyglutamate tails: severing activity by SPAST increases as the number of glutamates per tubulin rises from one to eight, but decreases beyond this glutamylation threshold. Glutamylation is also involved in cilia motility.

It localises to the cytoplasm. The protein localises to the cytoskeleton. It catalyses the reaction GTP + H2O = GDP + phosphate + H(+). Functionally, tubulin is the major constituent of microtubules, a cylinder consisting of laterally associated linear protofilaments composed of alpha- and beta-tubulin heterodimers. Microtubules grow by the addition of GTP-tubulin dimers to the microtubule end, where a stabilizing cap forms. Below the cap, tubulin dimers are in GDP-bound state, owing to GTPase activity of alpha-tubulin. This Mus musculus (Mouse) protein is Tubulin alpha chain-like 3 (Tubal3).